A 321-amino-acid chain; its full sequence is Anthranilate phosphoribosyltransferase (321 aa).

Residues Gly-72, 75–76 (GD), Thr-80, 82–85 (NVST), 99–107 (KHGNVSVTS), and Ser-111 each bind 5-phospho-alpha-D-ribose 1-diphosphate. Anthranilate is bound at residue Gly-72. Ser-84 contributes to the Mg(2+) binding site. Position 102 (Asn-102) interacts with anthranilate. Arg-157 is a binding site for anthranilate. Mg(2+) contacts are provided by Asp-216 and Glu-217.

Belongs to the anthranilate phosphoribosyltransferase family. In terms of assembly, homodimer. It depends on Mg(2+) as a cofactor.

The enzyme catalyses N-(5-phospho-beta-D-ribosyl)anthranilate + diphosphate = 5-phospho-alpha-D-ribose 1-diphosphate + anthranilate. Its pathway is amino-acid biosynthesis; L-tryptophan biosynthesis; L-tryptophan from chorismate: step 2/5. Catalyzes the transfer of the phosphoribosyl group of 5-phosphorylribose-1-pyrophosphate (PRPP) to anthranilate to yield N-(5'-phosphoribosyl)-anthranilate (PRA). This is Anthranilate phosphoribosyltransferase from Methanococcus vannielii (strain ATCC 35089 / DSM 1224 / JCM 13029 / OCM 148 / SB).